Reading from the N-terminus, the 633-residue chain is Glutamyl-tRNA(Gln) amidotransferase subunit E (633 aa).

Residues 414–437 (ALPDGNTEYMRPLPGKARMYPETD) form a disordered region.

Belongs to the GatB/GatE family. GatE subfamily. In terms of assembly, heterodimer of GatD and GatE.

The catalysed reaction is L-glutamyl-tRNA(Gln) + L-glutamine + ATP + H2O = L-glutaminyl-tRNA(Gln) + L-glutamate + ADP + phosphate + H(+). Allows the formation of correctly charged Gln-tRNA(Gln) through the transamidation of misacylated Glu-tRNA(Gln) in organisms which lack glutaminyl-tRNA synthetase. The reaction takes place in the presence of glutamine and ATP through an activated gamma-phospho-Glu-tRNA(Gln). The GatDE system is specific for glutamate and does not act on aspartate. The protein is Glutamyl-tRNA(Gln) amidotransferase subunit E of Pyrococcus abyssi (strain GE5 / Orsay).